We begin with the raw amino-acid sequence, 154 residues long: Cytochrome c-type biogenesis protein CcmE (154 aa).

Residues Met-1–Arg-8 are Cytoplasmic-facing. Residues Leu-9–Ala-29 traverse the membrane as a helical; Signal-anchor for type II membrane protein segment. Residues Leu-30 to Ala-154 lie on the Periplasmic side of the membrane. Residues His-124 and Tyr-128 each contribute to the heme site.

This sequence belongs to the CcmE/CycJ family.

Its subcellular location is the cell inner membrane. Functionally, heme chaperone required for the biogenesis of c-type cytochromes. Transiently binds heme delivered by CcmC and transfers the heme to apo-cytochromes in a process facilitated by CcmF and CcmH. This chain is Cytochrome c-type biogenesis protein CcmE, found in Cellvibrio japonicus (strain Ueda107) (Pseudomonas fluorescens subsp. cellulosa).